We begin with the raw amino-acid sequence, 317 residues long: Pantothenate kinase (317 aa).

99–106 (GSVSVGKS) lines the ATP pocket.

This sequence belongs to the prokaryotic pantothenate kinase family.

The protein resides in the cytoplasm. It catalyses the reaction (R)-pantothenate + ATP = (R)-4'-phosphopantothenate + ADP + H(+). Its pathway is cofactor biosynthesis; coenzyme A biosynthesis; CoA from (R)-pantothenate: step 1/5. The protein is Pantothenate kinase of Histophilus somni (strain 129Pt) (Haemophilus somnus).